The chain runs to 272 residues: Energy-coupling factor transporter ATP-binding protein EcfA1 (272 aa).

An ABC transporter domain is found at 2 to 237 (IKVSDVCFSY…KNIIEKAKID (236 aa)). An ATP-binding site is contributed by 37–44 (GHNGSGKS).

This sequence belongs to the ABC transporter superfamily. Energy-coupling factor EcfA family. Forms a stable energy-coupling factor (ECF) transporter complex composed of 2 membrane-embedded substrate-binding proteins (S component), 2 ATP-binding proteins (A component) and 2 transmembrane proteins (T component).

It localises to the cell membrane. Functionally, ATP-binding (A) component of a common energy-coupling factor (ECF) ABC-transporter complex. Unlike classic ABC transporters this ECF transporter provides the energy necessary to transport a number of different substrates. This is Energy-coupling factor transporter ATP-binding protein EcfA1 from Mesomycoplasma hyopneumoniae (strain J / ATCC 25934 / NCTC 10110) (Mycoplasma hyopneumoniae).